The following is a 227-amino-acid chain: MRIWAVLASFLVFFYIPQSYAGVALGATRVIYPEGQKQVQLAVTNNDDKSSYLIQSWIENAEGKKDARFVITPPLFSMQGKKENTLRIIDATNGQMPEDRESLFWVNVKAIPAMDKAKTGENYLQFAIVSRIKLLYRPQGLVIPPEQAPGKLEFTRENGGLTLFNPTPYYLTVTDLKAGNKSLENTMVPPQGKVTVNIPGGYTGGDITYKTINDYGALTEQVKGVVK.

The N-terminal stretch at Met1 to Ala21 is a signal peptide.

The protein belongs to the periplasmic pilus chaperone family.

It is found in the periplasm. Involved in the biogenesis of the F1C fimbriae. In Escherichia coli O6:H1 (strain CFT073 / ATCC 700928 / UPEC), this protein is Chaperone protein FocC (focC).